Reading from the N-terminus, the 166-residue chain is MSYTTYFLAFQLCVTLCFSGSYCQAPFFKEITILKDYFNASTSDVPNGGPLFLEILKNWKEESDKKIIQSQIVSFYFKFFEIFKDNQAIQRSMDVIKQDMFQRFLNGSSGKLNDFEKLIKIPVDNLQIQRKAISELIKVMNDLSPRSNLRKRKRSQTMFQGQRASK.

The first 23 residues, 1-23 (MSYTTYFLAFQLCVTLCFSGSYC), serve as a signal peptide directing secretion. Pyrrolidone carboxylic acid is present on Gln24. Asn39 and Asn106 each carry an N-linked (GlcNAc...) asparagine glycan.

It belongs to the type II (or gamma) interferon family. As to quaternary structure, homodimer. Interacts with IFNGR1 (via extracellular domain); this interaction promotes IFNGR1 dimerization. In terms of tissue distribution, released primarily from activated T lymphocytes.

The protein localises to the secreted. Type II interferon produced by immune cells such as T-cells and NK cells that plays crucial roles in antimicrobial, antiviral, and antitumor responses by activating effector immune cells and enhancing antigen presentation. Primarily signals through the JAK-STAT pathway after interaction with its receptor IFNGR1 to affect gene regulation. Upon IFNG binding, IFNGR1 intracellular domain opens out to allow association of downstream signaling components JAK2, JAK1 and STAT1, leading to STAT1 activation, nuclear translocation and transcription of IFNG-regulated genes. Many of the induced genes are transcription factors such as IRF1 that are able to further drive regulation of a next wave of transcription. Plays a role in class I antigen presentation pathway by inducing a replacement of catalytic proteasome subunits with immunoproteasome subunits. In turn, increases the quantity, quality, and repertoire of peptides for class I MHC loading. Increases the efficiency of peptide generation also by inducing the expression of activator PA28 that associates with the proteasome and alters its proteolytic cleavage preference. Up-regulates as well MHC II complexes on the cell surface by promoting expression of several key molecules such as cathepsins B/CTSB, H/CTSH, and L/CTSL. Participates in the regulation of hematopoietic stem cells during development and under homeostatic conditions by affecting their development, quiescence, and differentiation. The sequence is that of Interferon gamma (IFNG) from Sus scrofa (Pig).